A 295-amino-acid chain; its full sequence is 2-methylisocitrate lyase (295 aa).

A substrate-binding site is contributed by 45–47 (SGG). Aspartate 85 and aspartate 87 together coordinate Mg(2+). Residues 123 to 124 (CG), arginine 158, glutamate 188, 210 to 212 (NIT), arginine 241, and arginine 270 each bind substrate.

This sequence belongs to the isocitrate lyase/PEP mutase superfamily. Methylisocitrate lyase family. In terms of assembly, homotetramer; dimer of dimers. Mg(2+) serves as cofactor.

It catalyses the reaction (2S,3R)-3-hydroxybutane-1,2,3-tricarboxylate = pyruvate + succinate. It participates in organic acid metabolism; propanoate degradation. Functionally, involved in the catabolism of short chain fatty acids (SCFA) via the 2-methylcitrate cycle I (propionate degradation route). Catalyzes the thermodynamically favored C-C bond cleavage of (2R,3S)-2-methylisocitrate to yield pyruvate and succinate via an alpha-carboxy-carbanion intermediate. The protein is 2-methylisocitrate lyase of Salmonella typhimurium (strain LT2 / SGSC1412 / ATCC 700720).